The sequence spans 77 residues: Acyl carrier protein (77 aa).

One can recognise a Carrier domain in the interval 2-77; the sequence is SNIEERVRNI…SAIDYVVNNG (76 aa). Ser-37 carries the O-(pantetheine 4'-phosphoryl)serine modification.

Belongs to the acyl carrier protein (ACP) family. In terms of processing, 4'-phosphopantetheine is transferred from CoA to a specific serine of apo-ACP by AcpS. This modification is essential for activity because fatty acids are bound in thioester linkage to the sulfhydryl of the prosthetic group.

It localises to the cytoplasm. The protein operates within lipid metabolism; fatty acid biosynthesis. Functionally, carrier of the growing fatty acid chain in fatty acid biosynthesis. The chain is Acyl carrier protein from Psychromonas ingrahamii (strain DSM 17664 / CCUG 51855 / 37).